Consider the following 288-residue polypeptide: Glucose-1-phosphate thymidylyltransferase (288 aa).

A dTDP-alpha-D-glucose-binding site is contributed by Gly8. The dTTP site is built by Gly8, Gly11, Thr12, Arg13, Lys23, Gln24, Gln80, Gly85, and Asp108. DTDP-alpha-D-glucose contacts are provided by Lys23, Gln24, Gln80, Gly85, Asp108, Asn109, Gly143, Glu158, Lys159, Val169, and Asp222. Asp108 lines the Mg(2+) pocket. Asp222 contributes to the Mg(2+) binding site.

Belongs to the glucose-1-phosphate thymidylyltransferase family. Mg(2+) is required as a cofactor.

It catalyses the reaction dTTP + alpha-D-glucose 1-phosphate + H(+) = dTDP-alpha-D-glucose + diphosphate. Its pathway is carbohydrate biosynthesis; dTDP-L-rhamnose biosynthesis. In terms of biological role, catalyzes the conversion of glucose-1-phosphate and dTTP to dTDP-glucose and pyrophosphate. Involved in the biosynthesis of the dTDP-L-rhamnose which is a component of the critical linker, D-N-acetylglucosamine-L-rhamnose disaccharide, which connects the galactan region of arabinogalactan to peptidoglycan via a phosphodiester linkage. In Mycolicibacterium smegmatis (strain ATCC 700084 / mc(2)155) (Mycobacterium smegmatis), this protein is Glucose-1-phosphate thymidylyltransferase (rmlA).